Reading from the N-terminus, the 89-residue chain is Small ribosomal subunit protein uS15 (89 aa).

The protein belongs to the universal ribosomal protein uS15 family. Part of the 30S ribosomal subunit. Forms a bridge to the 50S subunit in the 70S ribosome, contacting the 23S rRNA.

In terms of biological role, one of the primary rRNA binding proteins, it binds directly to 16S rRNA where it helps nucleate assembly of the platform of the 30S subunit by binding and bridging several RNA helices of the 16S rRNA. Its function is as follows. Forms an intersubunit bridge (bridge B4) with the 23S rRNA of the 50S subunit in the ribosome. The protein is Small ribosomal subunit protein uS15 of Burkholderia ambifaria (strain MC40-6).